The following is a 418-amino-acid chain: NADH-quinone oxidoreductase subunit D (418 aa).

It belongs to the complex I 49 kDa subunit family. In terms of assembly, NDH-1 is composed of 14 different subunits. Subunits NuoB, C, D, E, F, and G constitute the peripheral sector of the complex.

It localises to the cell inner membrane. It carries out the reaction a quinone + NADH + 5 H(+)(in) = a quinol + NAD(+) + 4 H(+)(out). Its function is as follows. NDH-1 shuttles electrons from NADH, via FMN and iron-sulfur (Fe-S) centers, to quinones in the respiratory chain. The immediate electron acceptor for the enzyme in this species is believed to be ubiquinone. Couples the redox reaction to proton translocation (for every two electrons transferred, four hydrogen ions are translocated across the cytoplasmic membrane), and thus conserves the redox energy in a proton gradient. This is NADH-quinone oxidoreductase subunit D from Bordetella bronchiseptica (strain ATCC BAA-588 / NCTC 13252 / RB50) (Alcaligenes bronchisepticus).